The following is a 476-amino-acid chain: ATP synthase subunit beta, chloroplastic (476 aa).

156-163 (GGAGVGKT) is an ATP binding site.

This sequence belongs to the ATPase alpha/beta chains family. In terms of assembly, F-type ATPases have 2 components, CF(1) - the catalytic core - and CF(0) - the membrane proton channel. CF(1) has five subunits: alpha(3), beta(3), gamma(1), delta(1), epsilon(1). CF(0) has four main subunits: a(1), b(1), b'(1) and c(9-12).

The protein localises to the plastid. The protein resides in the chloroplast thylakoid membrane. The enzyme catalyses ATP + H2O + 4 H(+)(in) = ADP + phosphate + 5 H(+)(out). Produces ATP from ADP in the presence of a proton gradient across the membrane. The catalytic sites are hosted primarily by the beta subunits. This is ATP synthase subunit beta, chloroplastic from Fucus vesiculosus (Bladder wrack).